Consider the following 715-residue polypeptide: Polyribonucleotide nucleotidyltransferase (715 aa).

Mg(2+) is bound by residues Asp493 and Asp499. In terms of domain architecture, KH spans 560–619 (PRMITVKINPEKIRDVIGKGGSVIRALTEETGTTIDISDDGVVTIASTSSEGMAEAKKRI). Residues 629-697 (GQVYEGTVLK…EKGRVRLSAK (69 aa)) form the S1 motif domain.

It belongs to the polyribonucleotide nucleotidyltransferase family. Requires Mg(2+) as cofactor.

Its subcellular location is the cytoplasm. It catalyses the reaction RNA(n+1) + phosphate = RNA(n) + a ribonucleoside 5'-diphosphate. Functionally, involved in mRNA degradation. Catalyzes the phosphorolysis of single-stranded polyribonucleotides processively in the 3'- to 5'-direction. The sequence is that of Polyribonucleotide nucleotidyltransferase from Burkholderia cenocepacia (strain HI2424).